Here is a 196-residue protein sequence, read N- to C-terminus: GTP cyclohydrolase-2 (196 aa).

49–53 (RVHSE) contacts GTP. Cys54, Cys65, and Cys67 together coordinate Zn(2+). GTP contacts are provided by residues Gln70, 92–94 (EGR), and Thr114. Asp126 serves as the catalytic Proton acceptor. The Nucleophile role is filled by Arg128. Residues Thr149 and Lys154 each contribute to the GTP site.

This sequence belongs to the GTP cyclohydrolase II family. Homodimer. Requires Zn(2+) as cofactor.

The enzyme catalyses GTP + 4 H2O = 2,5-diamino-6-hydroxy-4-(5-phosphoribosylamino)-pyrimidine + formate + 2 phosphate + 3 H(+). The protein operates within cofactor biosynthesis; riboflavin biosynthesis; 5-amino-6-(D-ribitylamino)uracil from GTP: step 1/4. Catalyzes the conversion of GTP to 2,5-diamino-6-ribosylamino-4(3H)-pyrimidinone 5'-phosphate (DARP), formate and pyrophosphate. The chain is GTP cyclohydrolase-2 from Shigella dysenteriae serotype 1 (strain Sd197).